The chain runs to 92 residues: Putative pterin-4-alpha-carbinolamine dehydratase 2 (92 aa).

The protein belongs to the pterin-4-alpha-carbinolamine dehydratase family.

It catalyses the reaction (4aS,6R)-4a-hydroxy-L-erythro-5,6,7,8-tetrahydrobiopterin = (6R)-L-erythro-6,7-dihydrobiopterin + H2O. The sequence is that of Putative pterin-4-alpha-carbinolamine dehydratase 2 from Gloeobacter violaceus (strain ATCC 29082 / PCC 7421).